The chain runs to 166 residues: Small ribosomal subunit protein uS9 (166 aa).

Residues 135 to 166 (KKAGFLTRDPRATERKKYGLKKARKAPQYSKR) are disordered. Basic and acidic residues predominate over residues 142–151 (RDPRATERKK). A compositionally biased stretch (basic residues) spans 152-166 (YGLKKARKAPQYSKR).

Belongs to the universal ribosomal protein uS9 family.

The polypeptide is Small ribosomal subunit protein uS9 (Mycolicibacterium paratuberculosis (strain ATCC BAA-968 / K-10) (Mycobacterium paratuberculosis)).